Here is a 328-residue protein sequence, read N- to C-terminus: Probable cell division protein WhiA (328 aa).

The H-T-H motif DNA-binding region spans 275–308 (SLEELGRLAEPPMTKDAVAGRIRRLLSMADKRAE).

The protein belongs to the WhiA family.

Its function is as follows. Involved in cell division and chromosome segregation. The protein is Probable cell division protein WhiA of Corynebacterium jeikeium (strain K411).